Consider the following 266-residue polypeptide: bZIP transcription factor 12 (266 aa).

The bZIP domain maps to 184-248 (AMQRQKRMIK…KELKEMVVPV (65 aa)). The interval 187–205 (RQKRMIKNRESAARSRERK) is basic motif. A coiled-coil region spans residues 202 to 244 (RERKQAYIAELESLVTQLEEENAKMFKEQEEQHQKRLKELKEM). Residues 212 to 219 (LESLVTQL) form a leucine-zipper region.

The protein resides in the nucleus. Functionally, transcription activator that binds to the ABA-responsive elements (ABREs) in vitro. Involved in abiotic stress responses and abscisic acid (ABA) signaling. Involved in the signaling pathway that induces growth inhibition in response to D-allose. In Oryza sativa subsp. japonica (Rice), this protein is bZIP transcription factor 12.